The primary structure comprises 140 residues: Peptide methionine sulfoxide reductase MsrB (140 aa).

The MsrB domain occupies 9 to 131 (DALWREKLTP…NSASIVLDSE (123 aa)). Zn(2+) is bound by residues Cys48, Cys51, Cys97, and Cys100. The active-site Nucleophile is the Cys120.

The protein belongs to the MsrB Met sulfoxide reductase family. Zn(2+) is required as a cofactor.

It carries out the reaction L-methionyl-[protein] + [thioredoxin]-disulfide + H2O = L-methionyl-(R)-S-oxide-[protein] + [thioredoxin]-dithiol. This chain is Peptide methionine sulfoxide reductase MsrB, found in Cellvibrio japonicus (strain Ueda107) (Pseudomonas fluorescens subsp. cellulosa).